The sequence spans 483 residues: Glutamate--tRNA ligase (483 aa).

The 'HIGH' region motif lies at 11–21 (PSPTGLLHIGN). The 'KMSKS' region signature appears at 255 to 259 (KLSKR). Lys258 provides a ligand contact to ATP.

Belongs to the class-I aminoacyl-tRNA synthetase family. Glutamate--tRNA ligase type 1 subfamily. In terms of assembly, monomer.

It localises to the cytoplasm. The catalysed reaction is tRNA(Glu) + L-glutamate + ATP = L-glutamyl-tRNA(Glu) + AMP + diphosphate. Catalyzes the attachment of glutamate to tRNA(Glu) in a two-step reaction: glutamate is first activated by ATP to form Glu-AMP and then transferred to the acceptor end of tRNA(Glu). The sequence is that of Glutamate--tRNA ligase from Lactococcus lactis subsp. cremoris (strain MG1363).